The following is a 430-amino-acid chain: Glucose-6-phosphate isomerase (430 aa).

The active-site Proton donor is glutamate 284. Residues histidine 305 and lysine 420 contribute to the active site.

Belongs to the GPI family.

The protein resides in the cytoplasm. The enzyme catalyses alpha-D-glucose 6-phosphate = beta-D-fructose 6-phosphate. It functions in the pathway carbohydrate biosynthesis; gluconeogenesis. Its pathway is carbohydrate degradation; glycolysis; D-glyceraldehyde 3-phosphate and glycerone phosphate from D-glucose: step 2/4. Functionally, catalyzes the reversible isomerization of glucose-6-phosphate to fructose-6-phosphate. The polypeptide is Glucose-6-phosphate isomerase (Mycoplasma pneumoniae (strain ATCC 29342 / M129 / Subtype 1) (Mycoplasmoides pneumoniae)).